The sequence spans 364 residues: Aspartate aminotransferase (364 aa).

3 residues coordinate L-aspartate: Gly23, Trp99, and Asn143. An N6-(pyridoxal phosphate)lysine modification is found at Lys200. Arg320 serves as a coordination point for L-aspartate.

Belongs to the class-I pyridoxal-phosphate-dependent aminotransferase family. In terms of assembly, homodimer. The cofactor is pyridoxal 5'-phosphate.

The protein localises to the cytoplasm. The catalysed reaction is L-aspartate + 2-oxoglutarate = oxaloacetate + L-glutamate. The polypeptide is Aspartate aminotransferase (aspC) (Thermococcus kodakarensis (strain ATCC BAA-918 / JCM 12380 / KOD1) (Pyrococcus kodakaraensis (strain KOD1))).